We begin with the raw amino-acid sequence, 274 residues long: 2,3,4,5-tetrahydropyridine-2,6-dicarboxylate N-succinyltransferase (274 aa).

Residues Arg107 and Asp144 each coordinate substrate.

The protein belongs to the transferase hexapeptide repeat family. As to quaternary structure, homotrimer.

The protein localises to the cytoplasm. It carries out the reaction (S)-2,3,4,5-tetrahydrodipicolinate + succinyl-CoA + H2O = (S)-2-succinylamino-6-oxoheptanedioate + CoA. The protein operates within amino-acid biosynthesis; L-lysine biosynthesis via DAP pathway; LL-2,6-diaminopimelate from (S)-tetrahydrodipicolinate (succinylase route): step 1/3. The chain is 2,3,4,5-tetrahydropyridine-2,6-dicarboxylate N-succinyltransferase from Cereibacter sphaeroides (strain ATCC 17025 / ATH 2.4.3) (Rhodobacter sphaeroides).